A 194-amino-acid chain; its full sequence is Translationally-controlled tumor protein homolog 2 (194 aa).

The TCTP domain occupies 1-194 (MKLYKDLIGN…IKYGLLQVDV (194 aa)).

This sequence belongs to the TCTP family.

It is found in the cytoplasm. Functionally, involved in calcium binding and microtubule stabilization. The polypeptide is Translationally-controlled tumor protein homolog 2 (Dictyostelium discoideum (Social amoeba)).